Here is a 572-residue protein sequence, read N- to C-terminus: Urease subunit alpha (572 aa).

A Urease domain is found at 136–572 (GGIDTHIHWI…VPLAQRYFLF (437 aa)). Ni(2+) contacts are provided by H141, H143, and K224. K224 carries the N6-carboxylysine modification. Substrate is bound at residue H226. Ni(2+) is bound by residues H253 and H279. H327 functions as the Proton donor in the catalytic mechanism. D367 is a binding site for Ni(2+).

This sequence belongs to the metallo-dependent hydrolases superfamily. Urease alpha subunit family. In terms of assembly, heterotrimer of UreA (gamma), UreB (beta) and UreC (alpha) subunits. Three heterotrimers associate to form the active enzyme. The cofactor is Ni cation. In terms of processing, carboxylation allows a single lysine to coordinate two nickel ions.

It localises to the cytoplasm. The catalysed reaction is urea + 2 H2O + H(+) = hydrogencarbonate + 2 NH4(+). Its pathway is nitrogen metabolism; urea degradation; CO(2) and NH(3) from urea (urease route): step 1/1. The chain is Urease subunit alpha from Actinobacillus pleuropneumoniae serotype 3 (strain JL03).